Reading from the N-terminus, the 431-residue chain is Enolase (431 aa).

Q167 contacts (2R)-2-phosphoglycerate. E209 serves as the catalytic Proton donor. Residues D246, E289, and D316 each coordinate Mg(2+). (2R)-2-phosphoglycerate contacts are provided by K341, R370, S371, and K392. K341 acts as the Proton acceptor in catalysis.

Belongs to the enolase family. In terms of assembly, component of the RNA degradosome, a multiprotein complex involved in RNA processing and mRNA degradation. Requires Mg(2+) as cofactor.

It localises to the cytoplasm. Its subcellular location is the secreted. It is found in the cell surface. The enzyme catalyses (2R)-2-phosphoglycerate = phosphoenolpyruvate + H2O. It functions in the pathway carbohydrate degradation; glycolysis; pyruvate from D-glyceraldehyde 3-phosphate: step 4/5. Catalyzes the reversible conversion of 2-phosphoglycerate (2-PG) into phosphoenolpyruvate (PEP). It is essential for the degradation of carbohydrates via glycolysis. In Shewanella sediminis (strain HAW-EB3), this protein is Enolase.